A 1503-amino-acid chain; its full sequence is Protein Skeletor, isoforms D/E (1503 aa).

An N-terminal signal peptide occupies residues 1–28 (MLAMKDKPWLLLFGLLAALSCLASFGDA). 2 DM13 domains span residues 34–143 (GTKI…VSIP) and 151–258 (PQKI…VRLP). A DOMON domain is found at 287-419 (LAFEVRWAVA…GAESVVWAIG (133 aa)). 4 disordered regions span residues 451 to 491 (PLPE…NVEP), 830 to 857 (NPNLNPNHPNQNPIPNPHQKPNVTPTEI), 1086 to 1106 (IFNQPGGKGKGDQKPKASSVS), and 1426 to 1503 (EFRG…GRRA). Low complexity predominate over residues 830–840 (NPNLNPNHPNQ). Over residues 1452 to 1491 (SSSSGSTIYPYSSSTGASTSTVSSSASSPLSSSSLRPIST) the composition is skewed to low complexity.

As to quaternary structure, interacts with Chro and Mgtor as part of a macromolecular complex forming the spindle matrix. Chro colocalizes with Skeletor (Skel) on the chromosomes at interphase and on spindle during metaphase.

It localises to the cytoplasm. The protein resides in the cytoskeleton. Its subcellular location is the spindle. The protein localises to the nucleus. It is found in the nucleolus. It localises to the chromosome. Provides structural support to stabilize and organize the microtubule spindle during mitosis (within embryonic somatic cells) and meiosis (within spermatocytes). The role in mitosis regulation depends on the Ran pathway. In Drosophila melanogaster (Fruit fly), this protein is Protein Skeletor, isoforms D/E.